Here is a 183-residue protein sequence, read N- to C-terminus: Potassium-transporting ATPase KdpC subunit (183 aa).

A helical membrane pass occupies residues 10-30 (ASLLVLSLVTGVAYPLLVTGI).

It belongs to the KdpC family. In terms of assembly, the system is composed of three essential subunits: KdpA, KdpB and KdpC.

It is found in the cell inner membrane. Part of the high-affinity ATP-driven potassium transport (or Kdp) system, which catalyzes the hydrolysis of ATP coupled with the electrogenic transport of potassium into the cytoplasm. This subunit acts as a catalytic chaperone that increases the ATP-binding affinity of the ATP-hydrolyzing subunit KdpB by the formation of a transient KdpB/KdpC/ATP ternary complex. The protein is Potassium-transporting ATPase KdpC subunit of Pseudomonas aeruginosa (strain ATCC 15692 / DSM 22644 / CIP 104116 / JCM 14847 / LMG 12228 / 1C / PRS 101 / PAO1).